The primary structure comprises 209 residues: GTP cyclohydrolase-2 (209 aa).

Residue 49–53 (RIHSE) coordinates GTP. Zn(2+) contacts are provided by Cys-54, Cys-65, and Cys-67. GTP contacts are provided by residues Gln-70, 92-94 (EGR), and Thr-114. Catalysis depends on Asp-126, which acts as the Proton acceptor. The active-site Nucleophile is Arg-128. The GTP site is built by Thr-149 and Lys-154.

It belongs to the GTP cyclohydrolase II family. Zn(2+) is required as a cofactor.

The enzyme catalyses GTP + 4 H2O = 2,5-diamino-6-hydroxy-4-(5-phosphoribosylamino)-pyrimidine + formate + 2 phosphate + 3 H(+). It participates in cofactor biosynthesis; riboflavin biosynthesis; 5-amino-6-(D-ribitylamino)uracil from GTP: step 1/4. In terms of biological role, catalyzes the conversion of GTP to 2,5-diamino-6-ribosylamino-4(3H)-pyrimidinone 5'-phosphate (DARP), formate and pyrophosphate. This is GTP cyclohydrolase-2 from Shewanella pealeana (strain ATCC 700345 / ANG-SQ1).